The primary structure comprises 407 residues: Probable succinyl-diaminopimelate desuccinylase (407 aa).

Histidine 72 lines the Zn(2+) pocket. Aspartate 74 is a catalytic residue. Aspartate 105 lines the Zn(2+) pocket. Catalysis depends on glutamate 139, which acts as the Proton acceptor. Residues glutamate 140, glutamate 165, and histidine 378 each coordinate Zn(2+).

This sequence belongs to the peptidase M20A family. Zn(2+) is required as a cofactor. The cofactor is Co(2+).

It catalyses the reaction N-succinyl-(2S,6S)-2,6-diaminopimelate + H2O = (2S,6S)-2,6-diaminopimelate + succinate. The protein operates within amino-acid biosynthesis; L-lysine biosynthesis via DAP pathway; LL-2,6-diaminopimelate from (S)-tetrahydrodipicolinate (succinylase route): step 3/3. The sequence is that of Probable succinyl-diaminopimelate desuccinylase (dapE) from Staphylococcus aureus (strain N315).